The chain runs to 379 residues: Putative F-box protein At5g62660 (379 aa).

In terms of domain architecture, F-box spans 35–84; it reads ALVAPEIPLDLLIEILTKLPAKSLMRFKCVSKLWSSLIRSRFFSNCYLTV.

This is Putative F-box protein At5g62660 from Arabidopsis thaliana (Mouse-ear cress).